Reading from the N-terminus, the 418-residue chain is MTLLALGINHKTAPVSLRERVTFSPDTLDQALESLLSQPMVQGGVVLSTCNRTELYLSVEEQDNLHDKLVRWLCDYHNLDEEEVRNSLYWHHDNDAVSHLMRVASGLDSLVLGEPQILGQVKKAFADSGRGHANASELERMFQKSFSVAKRVRTETDIGASAVSVAFAACTLARQIFESLSTVTVMLVGAGETIELAARHLREHNVQKMIIANRTRERAQRLADEVGAEVIGLGDIDERLKDADIIISSTASPLPIIGKGMMERALKARRNQPMLLVDIAVPRDVEPEVGKLANAYLYSVDDLQSIIQHNLAQRKAAAVQAESIVEQEACEFMAWLRAQSVSETIREYRAQADQVREELTSKALAALRTGGDAEAIMQDLARKLTNRLIHTPTKSLQQAARDGDDERLHILRNSLGLE.

Substrate-binding positions include 49–52 (TCNR), serine 109, 114–116 (EPQ), and glutamine 120. Cysteine 50 functions as the Nucleophile in the catalytic mechanism. 189–194 (GAGETI) lines the NADP(+) pocket.

The protein belongs to the glutamyl-tRNA reductase family. Homodimer.

It catalyses the reaction (S)-4-amino-5-oxopentanoate + tRNA(Glu) + NADP(+) = L-glutamyl-tRNA(Glu) + NADPH + H(+). Its pathway is porphyrin-containing compound metabolism; protoporphyrin-IX biosynthesis; 5-aminolevulinate from L-glutamyl-tRNA(Glu): step 1/2. Its function is as follows. Catalyzes the NADPH-dependent reduction of glutamyl-tRNA(Glu) to glutamate 1-semialdehyde (GSA). The sequence is that of Glutamyl-tRNA reductase from Cronobacter sakazakii (strain ATCC BAA-894) (Enterobacter sakazakii).